Consider the following 214-residue polypeptide: Adenylate kinase (214 aa).

10 to 15 (GAGKGT) serves as a coordination point for ATP. The NMP stretch occupies residues 30-59 (STGDMLRAAVKAGTPLGLEAKKVMDAGQLV). AMP is bound by residues threonine 31, arginine 36, 57–59 (QLV), 85–88 (GFPR), and glutamine 92. The LID stretch occupies residues 122 to 159 (GRRVHPGSGRVYHVVFNPPKVEGKDDVTGEDLAIRPDD). ATP is bound by residues arginine 123 and 132–133 (VY). Residues arginine 156 and arginine 167 each coordinate AMP. Glutamine 200 is an ATP binding site.

This sequence belongs to the adenylate kinase family. In terms of assembly, monomer.

Its subcellular location is the cytoplasm. It catalyses the reaction AMP + ATP = 2 ADP. The protein operates within purine metabolism; AMP biosynthesis via salvage pathway; AMP from ADP: step 1/1. Catalyzes the reversible transfer of the terminal phosphate group between ATP and AMP. Plays an important role in cellular energy homeostasis and in adenine nucleotide metabolism. This is Adenylate kinase from Shewanella sp. (strain ANA-3).